The sequence spans 469 residues: UDP-N-acetylmuramoylalanine--D-glutamate ligase (469 aa).

110–116 is a binding site for ATP; that stretch reads GTNGKST.

The protein belongs to the MurCDEF family.

The protein localises to the cytoplasm. The catalysed reaction is UDP-N-acetyl-alpha-D-muramoyl-L-alanine + D-glutamate + ATP = UDP-N-acetyl-alpha-D-muramoyl-L-alanyl-D-glutamate + ADP + phosphate + H(+). The protein operates within cell wall biogenesis; peptidoglycan biosynthesis. Cell wall formation. Catalyzes the addition of glutamate to the nucleotide precursor UDP-N-acetylmuramoyl-L-alanine (UMA). The chain is UDP-N-acetylmuramoylalanine--D-glutamate ligase from Synechococcus sp. (strain JA-3-3Ab) (Cyanobacteria bacterium Yellowstone A-Prime).